Consider the following 497-residue polypeptide: Arabinose import ATP-binding protein AraG (497 aa).

2 ABC transporter domains span residues 6-242 and 250-497; these read LRFD…MVGR and FRPR…ALPA. 38-45 contributes to the ATP binding site; sequence GENGAGKS.

The protein belongs to the ABC transporter superfamily. Arabinose importer (TC 3.A.1.2.2) family. As to quaternary structure, the complex is composed of two ATP-binding proteins (AraG), two transmembrane proteins (AraH) and a solute-binding protein (AraF).

The protein resides in the cell inner membrane. It catalyses the reaction L-arabinose(out) + ATP + H2O = L-arabinose(in) + ADP + phosphate + H(+). In terms of biological role, part of the ABC transporter complex AraFGH involved in arabinose import. Responsible for energy coupling to the transport system. The protein is Arabinose import ATP-binding protein AraG of Chromohalobacter salexigens (strain ATCC BAA-138 / DSM 3043 / CIP 106854 / NCIMB 13768 / 1H11).